Consider the following 216-residue polypeptide: Uracil phosphoribosyltransferase (216 aa).

30–34 is a binding site for GTP; it reads KNLVK. Residues Arg-80, Arg-105, and 140-148 contribute to the 5-phospho-alpha-D-ribose 1-diphosphate site; that span reads DPMIATGST. Residues Ile-203 and 208 to 210 contribute to the uracil site; that span reads GDA. Residue Asp-209 participates in 5-phospho-alpha-D-ribose 1-diphosphate binding.

It belongs to the UPRTase family. Mg(2+) serves as cofactor.

The catalysed reaction is UMP + diphosphate = 5-phospho-alpha-D-ribose 1-diphosphate + uracil. Its pathway is pyrimidine metabolism; UMP biosynthesis via salvage pathway; UMP from uracil: step 1/1. With respect to regulation, allosterically activated by GTP. Functionally, catalyzes the conversion of uracil and 5-phospho-alpha-D-ribose 1-diphosphate (PRPP) to UMP and diphosphate. The chain is Uracil phosphoribosyltransferase from Sulfolobus acidocaldarius (strain ATCC 33909 / DSM 639 / JCM 8929 / NBRC 15157 / NCIMB 11770).